Reading from the N-terminus, the 188-residue chain is Elongation factor P (188 aa).

Lys34 carries the post-translational modification N6-(3,6-diaminohexanoyl)-5-hydroxylysine.

The protein belongs to the elongation factor P family. May be beta-lysylated on the epsilon-amino group of Lys-34 by the combined action of EpmA and EpmB, and then hydroxylated on the C5 position of the same residue by EpmC (if this protein is present). Lysylation is critical for the stimulatory effect of EF-P on peptide-bond formation. The lysylation moiety may extend toward the peptidyltransferase center and stabilize the terminal 3-CCA end of the tRNA. Hydroxylation of the C5 position on Lys-34 may allow additional potential stabilizing hydrogen-bond interactions with the P-tRNA.

The protein localises to the cytoplasm. It participates in protein biosynthesis; polypeptide chain elongation. Its function is as follows. Involved in peptide bond synthesis. Alleviates ribosome stalling that occurs when 3 or more consecutive Pro residues or the sequence PPG is present in a protein, possibly by augmenting the peptidyl transferase activity of the ribosome. Modification of Lys-34 is required for alleviation. The polypeptide is Elongation factor P (Stenotrophomonas maltophilia (strain K279a)).